A 510-amino-acid chain; its full sequence is Probable inositol 3-phosphate synthase isozyme 3 (510 aa).

Belongs to the myo-inositol 1-phosphate synthase family. It depends on NAD(+) as a cofactor. In terms of tissue distribution, expressed in siliques, leaves, roots, seed endosperm, but not in embryos. Highest expression in roots. Confined to vascular tissue and hydathodes of leaves.

It localises to the cytoplasm. The catalysed reaction is D-glucose 6-phosphate = 1D-myo-inositol 3-phosphate. It participates in polyol metabolism; myo-inositol biosynthesis; myo-inositol from D-glucose 6-phosphate: step 1/2. In terms of biological role, key enzyme in myo-inositol biosynthesis pathway that catalyzes the conversion of glucose 6-phosphate to 1-myo-inositol 1-phosphate in a NAD-dependent manner. This Arabidopsis thaliana (Mouse-ear cress) protein is Probable inositol 3-phosphate synthase isozyme 3 (IPS3).